The sequence spans 406 residues: Arginine deiminase (406 aa).

Cysteine 396 (amidino-cysteine intermediate) is an active-site residue.

Belongs to the arginine deiminase family.

It is found in the cytoplasm. The enzyme catalyses L-arginine + H2O = L-citrulline + NH4(+). Its pathway is amino-acid degradation; L-arginine degradation via ADI pathway; carbamoyl phosphate from L-arginine: step 1/2. The polypeptide is Arginine deiminase (Vibrio vulnificus (strain YJ016)).